The primary structure comprises 380 residues: mRNA cap guanine-N(7) methyltransferase (380 aa).

Residues 24 to 333 (SRIFFMRNMN…MYLVFGFRKK (310 aa)) enclose the mRNA cap 0 methyltransferase domain. Residue 33–34 (NN) coordinates mRNA. S-adenosyl-L-methionine is bound by residues K37, A62, D84, D117, Q139, and Y144. The interval 336–380 (EAEKTEEEPATTKPVAESESEQKEVTESEEKEDQEDCEHQEAQTN) is disordered.

Belongs to the class I-like SAM-binding methyltransferase superfamily. mRNA cap 0 methyltransferase family.

It localises to the nucleus. It catalyses the reaction a 5'-end (5'-triphosphoguanosine)-ribonucleoside in mRNA + S-adenosyl-L-methionine = a 5'-end (N(7)-methyl 5'-triphosphoguanosine)-ribonucleoside in mRNA + S-adenosyl-L-homocysteine. Functionally, mRNA-capping methyltransferase that methylates the N7 position of the added guanosine to the 5'-cap structure of mRNAs. Binds RNA containing 5'-terminal GpppC. This Caenorhabditis elegans protein is mRNA cap guanine-N(7) methyltransferase (tag-72).